We begin with the raw amino-acid sequence, 213 residues long: uncharacterized protein (213 aa).

Positions 1-14 (MSSDVLVTTPAQRQ) are enriched in polar residues. Residues 1–26 (MSSDVLVTTPAQRQTEPHAEAVSRNR) are disordered. Residues 29–89 (QATFRKVLAA…EVYLDLVRQV (61 aa)) form the HTH tetR-type domain.

This is an uncharacterized protein from Mycobacterium tuberculosis (strain CDC 1551 / Oshkosh).